The sequence spans 615 residues: Granule-bound starch synthase 1, chloroplastic/amyloplastic (615 aa).

The transit peptide at 1-70 directs the protein to the chloroplast; the sequence is MAALVTSQLA…DRRCLSMVVR (70 aa). ADP-alpha-D-glucose is bound at residue Lys91.

Belongs to the glycosyltransferase 1 family. Bacterial/plant glycogen synthase subfamily. As to expression, found in seeds and pollen.

Its subcellular location is the plastid. It is found in the chloroplast. The protein localises to the amyloplast. The enzyme catalyses an NDP-alpha-D-glucose + [(1-&gt;4)-alpha-D-glucosyl](n) = [(1-&gt;4)-alpha-D-glucosyl](n+1) + a ribonucleoside 5'-diphosphate + H(+). It participates in glycan biosynthesis; starch biosynthesis. This is Granule-bound starch synthase 1, chloroplastic/amyloplastic (WAXY) from Triticum aestivum (Wheat).